A 309-amino-acid chain; its full sequence is Transcription termination/antitermination protein NusG (309 aa).

2 disordered regions span residues 1 to 24 and 58 to 91; these read MSDPNLNDDATEPRGLAADTADDE and EGDHIAETDEDIEAGAVETDEDVETDTDEDVEAG. Residues 65–91 show a composition bias toward acidic residues; sequence TDEDIEAGAVETDEDVETDTDEDVEAG.

It belongs to the NusG family.

Participates in transcription elongation, termination and antitermination. The polypeptide is Transcription termination/antitermination protein NusG (Streptomyces galbus).